The sequence spans 163 residues: MNDLLPDLCDHYEQDVRWLPLVLNDYGGKKIFYGEVVTLRCFEDNSLVRDIVSQDGTGKVLFIDGHASYNGALLGDQLALLAVKNGWQGIVINGTARDVGTLATLDLGVKALGTCPYKTVKRQTGDMNVTMTVAHTMIYPGDYLYADLNGILLSKQSLDLSVL.

Residues 75–78 (GDQL) and Arg-97 contribute to the substrate site. Asp-98 serves as a coordination point for a divalent metal cation.

It belongs to the class II aldolase/RraA-like family. In terms of assembly, homotrimer. Requires a divalent metal cation as cofactor.

The catalysed reaction is 4-hydroxy-4-methyl-2-oxoglutarate = 2 pyruvate. The enzyme catalyses oxaloacetate + H(+) = pyruvate + CO2. Its function is as follows. Catalyzes the aldol cleavage of 4-hydroxy-4-methyl-2-oxoglutarate (HMG) into 2 molecules of pyruvate. Also contains a secondary oxaloacetate (OAA) decarboxylase activity due to the common pyruvate enolate transition state formed following C-C bond cleavage in the retro-aldol and decarboxylation reactions. This Photobacterium profundum (strain SS9) protein is Putative 4-hydroxy-4-methyl-2-oxoglutarate aldolase.